Here is a 216-residue protein sequence, read N- to C-terminus: Cytidylate kinase (216 aa).

Position 7 to 15 (7 to 15 (GPSGTGKST)) interacts with ATP.

This sequence belongs to the cytidylate kinase family. Type 1 subfamily.

It is found in the cytoplasm. It carries out the reaction CMP + ATP = CDP + ADP. The enzyme catalyses dCMP + ATP = dCDP + ADP. This is Cytidylate kinase from Chlamydia trachomatis serovar L2 (strain ATCC VR-902B / DSM 19102 / 434/Bu).